Reading from the N-terminus, the 1093-residue chain is Fused isobutyryl-CoA mutase (1093 aa).

The segment at 1–20 (MTDLSDVSRTAAAKPPAVPG) is disordered. In terms of domain architecture, B12-binding spans 26–156 (KVRFVTAASL…AGMITDMAQR (131 aa)). Histidine 39 contributes to the adenosylcob(III)alamin binding site. A GTPase chaperone MeaI region spans residues 169–417 (LDTVVAGDRR…YQGLVGALGA (249 aa)). 219-224 (GAGKSS) is a binding site for GTP. Residues serine 223, isoleucine 248, aspartate 249, and aspartate 262 each coordinate Mg(2+). Residue arginine 265 participates in GTP binding. Glutamate 310 and threonine 311 together coordinate Mg(2+). Residue 357–360 (NKFD) coordinates GTP. Residues 418-579 (RGMSLKPGTL…MRENVPGSFP (162 aa)) are linker. Residues phenylalanine 587, arginine 622, arginine 728, tyrosine 772, serine 821, arginine 856, and lysine 861 each contribute to the substrate site. Glutamate 973 and asparagine 1092 together coordinate GTP.

Belongs to the IcmF family. Homodimer. Requires adenosylcob(III)alamin as cofactor. Mg(2+) serves as cofactor.

It catalyses the reaction 2-methylpropanoyl-CoA = butanoyl-CoA. The catalysed reaction is 3-methylbutanoyl-CoA = 2,2-dimethylpropanoyl-CoA. It carries out the reaction GTP + H2O = GDP + phosphate + H(+). With respect to regulation, is prone to inactivation during catalytic turnover due to the occasional loss of the 5'-deoxyadenosine moiety and formation of the inactive cob(II)alamin cofactor in its active site. The GTPase activity of IcmF powers the ejection of the inactive cofactor and requires the presence of an acceptor protein, adenosyltransferase (ATR), for receiving it. ATR, in turn, catalyzes an adenosylation reaction converting cob(II)alamin in the presence of ATP and a reductant to the active AdoCbl cofactor. The repaired cofactor is then reloaded onto IcmF in a GTPase-gated step, regenerating active enzyme. The GTPase activity of IcmF is significantly decreased in the presence of excess of AdoCbl or cob(II)alamin and is higher in the apoenzyme state, indicating that the G-domain senses the presence and identity of the cofactor in the mutase active site. In terms of biological role, catalyzes the reversible interconversion of isobutyryl-CoA and n-butyryl-CoA, and to a much lesser extent, of pivalyl-CoA and isovaleryl-CoA, using radical chemistry. Also exhibits GTPase activity, associated with its G-protein domain (MeaI) that functions as a chaperone that assists cofactor delivery and proper holo-enzyme assembly. The G-domain of IcmF also has a role in its cofactor repair. Does not display ATPase activity. This Cupriavidus metallidurans (strain ATCC 43123 / DSM 2839 / NBRC 102507 / CH34) (Ralstonia metallidurans) protein is Fused isobutyryl-CoA mutase.